The following is a 174-amino-acid chain: MAQSLTPSVETDSKTGPSKAISFQDYLDLSALDWARLRAVLAPTLYVDYTKIGKEKWDAMSADDFMAMVSNDDFLGDLCVKTQHLIGATYWERVSESKVIGHHQLRAAHQVYTSPDLKTVKLRGHSHATNEHYYVKSGGVWKFAGLKPEVRWNEYKFEEVFKGSYTQSEKQSLP.

Tyr49 lines the substrate pocket. Residues His84 and His109 contribute to the active site. Residue Asn130 participates in substrate binding.

It belongs to the scytalone dehydratase family. In terms of assembly, homotrimer. Each subunit contains an active site, located in the central part of the hydrophobic core of the monomer, which functions independently.

Functionally, scytalone dehydratase-like protein; part of the Pks2 gene cluster that mediates the formation of infectious structures (appressoria), enabling these fungi to kill insects faster. The product of the Pks2 gene cluster is different from the one of Pks1 and has still not been identified. This is Scytalone dehydratase-like protein Arp1 from Metarhizium majus (strain ARSEF 297).